A 196-amino-acid chain; its full sequence is Nucleoside triphosphate pyrophosphatase (196 aa).

The active-site Proton acceptor is the aspartate 73.

This sequence belongs to the Maf family. The cofactor is a divalent metal cation.

Its subcellular location is the cytoplasm. It catalyses the reaction a ribonucleoside 5'-triphosphate + H2O = a ribonucleoside 5'-phosphate + diphosphate + H(+). It carries out the reaction a 2'-deoxyribonucleoside 5'-triphosphate + H2O = a 2'-deoxyribonucleoside 5'-phosphate + diphosphate + H(+). In terms of biological role, nucleoside triphosphate pyrophosphatase. May have a dual role in cell division arrest and in preventing the incorporation of modified nucleotides into cellular nucleic acids. The chain is Nucleoside triphosphate pyrophosphatase from Anaplasma marginale (strain Florida).